The sequence spans 414 residues: Cyclic di-GMP phosphodiesterase PA4108 (414 aa).

An HD-GYP domain is found at 133–330; it reads ISASVLRHPN…YPVGALVRLE (198 aa). A divalent metal cation-binding residues include histidine 160, histidine 192, aspartate 193, histidine 221, histidine 246, and histidine 247.

In terms of assembly, monomer.

It carries out the reaction 3',3'-c-di-GMP + 2 H2O = 2 GMP + 2 H(+). Activated by Mg(2+) and Mn(2+). Its function is as follows. Phosphodiesterase (PDE) that catalyzes the hydrolysis of cyclic diguanylate (c-di-GMP) to GMP. Hydrolyzes c-di-GMP to GMP in a two-step reaction, via the linear intermediate 5'-phosphoguanylyl(3'-&gt;5')guanosine (pGpG). In vitro, can use pGpG as an alternative substrate and hydrolyze it into GMP. Acts in regulation of motility, synthesis of virulence determinants and biofilm architecture. The sequence is that of Cyclic di-GMP phosphodiesterase PA4108 from Pseudomonas aeruginosa (strain ATCC 15692 / DSM 22644 / CIP 104116 / JCM 14847 / LMG 12228 / 1C / PRS 101 / PAO1).